Reading from the N-terminus, the 66-residue chain is MSGKKSPYPDGRIPDRNPDGTPAVPWRSRWTEGVLPLWLVATAGGMAVLFVVGLFFYGSYTGVGSA.

Residues 1–25 (MSGKKSPYPDGRIPDRNPDGTPAVP) form a disordered region. The chain crosses the membrane as a helical span at residues 37-57 (LWLVATAGGMAVLFVVGLFFY).

The protein belongs to the PsbJ family. As to quaternary structure, PSII is composed of 1 copy each of membrane proteins PsbA, PsbB, PsbC, PsbD, PsbE, PsbF, PsbH, PsbI, PsbJ, PsbK, PsbL, PsbM, PsbT, PsbX, PsbY, PsbZ, Psb30/Ycf12, peripheral proteins PsbO, CyanoQ (PsbQ), PsbU, PsbV and a large number of cofactors. It forms dimeric complexes.

It is found in the cellular thylakoid membrane. Its function is as follows. One of the components of the core complex of photosystem II (PSII). PSII is a light-driven water:plastoquinone oxidoreductase that uses light energy to abstract electrons from H(2)O, generating O(2) and a proton gradient subsequently used for ATP formation. It consists of a core antenna complex that captures photons, and an electron transfer chain that converts photonic excitation into a charge separation. In Synechococcus sp. (strain CC9605), this protein is Photosystem II reaction center protein J.